Consider the following 269-residue polypeptide: Shikimate dehydrogenase (NADP(+)) (269 aa).

Residues 19 to 21 (SLS) and T66 each bind shikimate. The Proton acceptor role is filled by K70. D82 is a binding site for NADP(+). Shikimate contacts are provided by N91 and D106. NADP(+)-binding positions include 130-134 (GAGGA), 153-158 (NRTKEK), and I214. Y216 provides a ligand contact to shikimate. Position 235 (G235) interacts with NADP(+). Q242 serves as a coordination point for shikimate.

Belongs to the shikimate dehydrogenase family. As to quaternary structure, homodimer.

It carries out the reaction shikimate + NADP(+) = 3-dehydroshikimate + NADPH + H(+). The protein operates within metabolic intermediate biosynthesis; chorismate biosynthesis; chorismate from D-erythrose 4-phosphate and phosphoenolpyruvate: step 4/7. Functionally, involved in the biosynthesis of the chorismate, which leads to the biosynthesis of aromatic amino acids. Catalyzes the reversible NADPH linked reduction of 3-dehydroshikimate (DHSA) to yield shikimate (SA). This is Shikimate dehydrogenase (NADP(+)) from Aquifex aeolicus (strain VF5).